The sequence spans 357 residues: MGICASSMEGEKTNTDINLSIEKERKKKHNEVKLLLLGAGESGKSTISKQMKIIHQSGYSNEERKEFKPIITRNILDNMRVLLDGMGRLGMTIDPSNSDAAVMIKELTSLQASIVTDCWGELNEDQGKKIKALWTDPGVKQAMRRANEFSTLPDSAPYFFDSIDRMTSPVYIPTDQDILHTRVMTRGVHETNFEIGKIKFRLVDVGGQRSERKKWLSCFDDVTAVVFCVALSEYDLLLYEDNSTNRMLESLRVFSDVCNSWFVNTPIILFLNKSDLFREKIKHVDLSETFPEYKGGRDYERASNYIKERFWQINKTEQKAIYSHITCATDTNNIRVVFEAVKDIIFTQCVMKAGLYS.

Gly-2 carries N-myristoyl glycine lipidation. The S-palmitoyl cysteine moiety is linked to residue Cys-4. The region spanning 30–356 (NEVKLLLLGA…TQCVMKAGLY (327 aa)) is the G-alpha domain. Residues 33-46 (KLLLLGAGESGKST) form a G1 motif region. GTP is bound by residues Glu-41, Ser-42, Gly-43, Lys-44, Ser-45, and Thr-46. Residue Ser-45 coordinates Mg(2+). Ser-113 carries the phosphoserine modification. GTP contacts are provided by Asp-154, Leu-179, Thr-185, Gly-207, Asn-272, Lys-273, Asp-275, and Ala-328. A G2 motif region spans residues 177 to 185 (DILHTRVMT). Position 185 (Thr-185) interacts with Mg(2+). The segment at 200 to 209 (FRLVDVGGQR) is G3 motif. The tract at residues 268-275 (ILFLNKSD) is G4 motif. The segment at 326–331 (TCATDT) is G5 motif.

This sequence belongs to the G-alpha family. In terms of assembly, g proteins are composed of 3 units; alpha, beta and gamma. The alpha chain contains the guanine nucleotide binding site. Interacts with the RAP guanine nucleotide exchange factor glfB. Mg(2+) serves as cofactor. Post-translationally, ser-113 is transiently phosphorylated following stimulation with extracellular cAMP.

In terms of biological role, guanine nucleotide-binding proteins (G proteins) are involved as modulators or transducers in various transmembrane signaling systems. G alpha-2 is required for the early aggregation process and most of the known cAMP receptor-mediated responses. Interacts with downstream effector gflB, a Rap guanine nucleotide exchange factor, to regulate the balance between Ras and Rap signaling at the leading edge of chemotaxing cells. The sequence is that of Guanine nucleotide-binding protein alpha-2 subunit (gpaB) from Dictyostelium discoideum (Social amoeba).